Reading from the N-terminus, the 238-residue chain is Heme oxygenase (238 aa).

Residue histidine 17 participates in heme b binding.

It belongs to the heme oxygenase family.

The protein localises to the plastid. It is found in the chloroplast. The enzyme catalyses heme b + 3 reduced [NADPH--hemoprotein reductase] + 3 O2 = biliverdin IXalpha + CO + Fe(2+) + 3 oxidized [NADPH--hemoprotein reductase] + 3 H2O + H(+). Catalyzes the opening of the heme ring with the release of iron. Key enzyme in the synthesis of the chromophoric part of the photosynthetic antennae. In Pyropia yezoensis (Susabi-nori), this protein is Heme oxygenase (pbsA).